A 75-amino-acid chain; its full sequence is DNA-directed RNA polymerase subunit Rpo5 (75 aa).

This sequence belongs to the archaeal Rpo5/eukaryotic RPB5 RNA polymerase subunit family. Part of the RNA polymerase complex.

Its subcellular location is the cytoplasm. It catalyses the reaction RNA(n) + a ribonucleoside 5'-triphosphate = RNA(n+1) + diphosphate. Its function is as follows. DNA-dependent RNA polymerase (RNAP) catalyzes the transcription of DNA into RNA using the four ribonucleoside triphosphates as substrates. The sequence is that of DNA-directed RNA polymerase subunit Rpo5 from Halobacterium salinarum (strain ATCC 700922 / JCM 11081 / NRC-1) (Halobacterium halobium).